We begin with the raw amino-acid sequence, 585 residues long: Aspartate--tRNA(Asp/Asn) ligase (585 aa).

An L-aspartate-binding site is contributed by Glu-173. The segment at Gln-197–Lys-200 is aspartate. Residue Arg-219 coordinates L-aspartate. Residues Arg-219–Glu-221 and Gln-228 each bind ATP. His-447 serves as a coordination point for L-aspartate. Glu-477 contributes to the ATP binding site. Arg-484 lines the L-aspartate pocket. ATP is bound at residue Gly-529 to Arg-532.

Belongs to the class-II aminoacyl-tRNA synthetase family. Type 1 subfamily. In terms of assembly, homodimer.

It localises to the cytoplasm. It carries out the reaction tRNA(Asx) + L-aspartate + ATP = L-aspartyl-tRNA(Asx) + AMP + diphosphate. Aspartyl-tRNA synthetase with relaxed tRNA specificity since it is able to aspartylate not only its cognate tRNA(Asp) but also tRNA(Asn). Reaction proceeds in two steps: L-aspartate is first activated by ATP to form Asp-AMP and then transferred to the acceptor end of tRNA(Asp/Asn). This chain is Aspartate--tRNA(Asp/Asn) ligase, found in Campylobacter concisus (strain 13826).